The sequence spans 235 residues: BPI fold-containing family A member 2 (235 aa).

The N-terminal stretch at 1 to 20 (MFQLGSLVVLCGLLIGTSES) is a signal peptide. Residues C161 and C204 are joined by a disulfide bond.

It belongs to the BPI/LBP/Plunc superfamily. Plunc family. As to expression, expressed in parotid, submandibular and sublingual glands.

Its subcellular location is the secreted. Has strong antibacterial activity against P.aeruginosa. The polypeptide is BPI fold-containing family A member 2 (Bpifa2) (Rattus norvegicus (Rat)).